We begin with the raw amino-acid sequence, 207 residues long: Guanylate kinase (207 aa).

A Guanylate kinase-like domain is found at 6–185 (GLLIVLSGPS…AKNRIQCIVE (180 aa)). 13-20 (GPSGVGKG) provides a ligand contact to ATP.

It belongs to the guanylate kinase family.

The protein localises to the cytoplasm. The enzyme catalyses GMP + ATP = GDP + ADP. Functionally, essential for recycling GMP and indirectly, cGMP. The polypeptide is Guanylate kinase (Staphylococcus aureus (strain USA300)).